Here is a 108-residue protein sequence, read N- to C-terminus: Ig kappa chain V-V region HP 124E1 (108 aa).

The interval 1–23 is framework-1; that stretch reads DIQMTQTTSSLSASLGDRVTISC. A disulfide bridge connects residues Cys-23 and Cys-88. Positions 24–34 are complementarity-determining-1; that stretch reads RASQDINNYLN. Residues 35-49 form a framework-2 region; sequence WYQQKPDGTVKLLIY. Positions 50–56 are complementarity-determining-2; sequence YTSRLHS. The tract at residues 57–88 is framework-3; it reads GVPSRFSGSGSGTDYSLTISNLEQEDIATYFC. A complementarity-determining-3 region spans residues 89-97; the sequence is QQGKTLPRT. The framework-4 stretch occupies residues 98-108; that stretch reads FGGGTKLEIKR.

The polypeptide is Ig kappa chain V-V region HP 124E1 (Mus musculus (Mouse)).